A 309-amino-acid polypeptide reads, in one-letter code: Nudix hydrolase 14, chloroplastic (309 aa).

The transit peptide at 1–60 (MAGFTLLPSRLLAFPSRALPRRLHHHHAKLILRCKMSSSSSSLTQSITLPSQPNEPVLVS) directs the protein to the chloroplast. A Nudix hydrolase domain is found at 139–292 (ARGPAVAVLI…KVLMSIGLYE (154 aa)). A Nudix box motif is present at residues 179–200 (MLDDDKGDFVGTAVREVEEEIG). 2 residues coordinate Mg(2+): Glu194 and Glu198.

This sequence belongs to the Nudix hydrolase family. In terms of assembly, homodimer. The cofactor is Mg(2+). It depends on Mn(2+) as a cofactor. Expressed in roots, leaves, stems and inflorescences.

The protein resides in the plastid. It localises to the chloroplast. It catalyses the reaction ADP-sugar + H2O = AMP + alpha-D-aldose 1-phosphate.. Its function is as follows. Mediates the hydrolysis of some nucleoside diphosphate derivatives. Can use ADP-glucose, ADP-mannose and ADP-ribose as substrates. Regulates the intracellular ADP-glucose levels linked to starch biosynthesis. The polypeptide is Nudix hydrolase 14, chloroplastic (NUDT14) (Arabidopsis thaliana (Mouse-ear cress)).